The following is an 832-amino-acid chain: Putative beta-glucosidase (832 aa).

The active site involves Asp-225. In terms of domain architecture, PA14 spans 397–556; sequence TGKHGYVAKF…DPETEIDYAV (160 aa).

The protein belongs to the glycosyl hydrolase 3 family.

It localises to the cytoplasm. It carries out the reaction Hydrolysis of terminal, non-reducing beta-D-glucosyl residues with release of beta-D-glucose.. The chain is Putative beta-glucosidase from Schizosaccharomyces pombe (strain 972 / ATCC 24843) (Fission yeast).